We begin with the raw amino-acid sequence, 148 residues long: MNFSFVPLFLVTLILLGVVSNNNSITISATILLLMQQTALVQFVPLVEKHGLNLGIILLTIGVLSPLVSGKAQVPPVAEFLNFKMISAVFIGIFVAWLAGRGVPLMGQQPVLITGLLIGTVIGVAFMGGIPVGPLIAAGILSFVVGKG.

The next 4 helical transmembrane spans lie at 13-35 (LILLGVVSNNNSITISATILLLM), 50-70 (HGLNLGIILLTIGVLSPLVSG), 80-100 (FLNFKMISAVFIGIFVAWLAG), and 121-141 (VIGVAFMGGIPVGPLIAAGIL).

It belongs to the UPF0756 family.

Its subcellular location is the cell membrane. The polypeptide is UPF0756 membrane protein NMC1845 (Neisseria meningitidis serogroup C / serotype 2a (strain ATCC 700532 / DSM 15464 / FAM18)).